The chain runs to 461 residues: Protein YIG1 (461 aa).

Residues 58–80 (SNVGEDGGDVGNYSEEDDDGDEE) form a disordered region. Residues 71–80 (SEEDDDGDEE) are compositionally biased toward acidic residues.

The protein resides in the cytoplasm. It localises to the nucleus. Involved in the regulation of anaerobiotic glycerol metabolism. The protein is Protein YIG1 (YIG1) of Saccharomyces cerevisiae (strain ATCC 204508 / S288c) (Baker's yeast).